The sequence spans 344 residues: Holliday junction branch migration complex subunit RuvB (344 aa).

Residues 1 to 183 (MLDERLISSH…FGISCRLDFY (183 aa)) form a large ATPase domain (RuvB-L) region. Residues I22, R23, G64, K67, T68, T69, 130 to 132 (EDY), R173, Y183, and R220 each bind ATP. T68 serves as a coordination point for Mg(2+). Positions 184–254 (TPLELSEIIL…LAKWALEMLE (71 aa)) are small ATPAse domain (RuvB-S). The interval 257-344 (ECGLDVMDRM…LEGKGLFSDA (88 aa)) is head domain (RuvB-H). DNA contacts are provided by K312 and R317.

Belongs to the RuvB family. In terms of assembly, homohexamer. Forms an RuvA(8)-RuvB(12)-Holliday junction (HJ) complex. HJ DNA is sandwiched between 2 RuvA tetramers; dsDNA enters through RuvA and exits via RuvB. An RuvB hexamer assembles on each DNA strand where it exits the tetramer. Each RuvB hexamer is contacted by two RuvA subunits (via domain III) on 2 adjacent RuvB subunits; this complex drives branch migration. In the full resolvosome a probable DNA-RuvA(4)-RuvB(12)-RuvC(2) complex forms which resolves the HJ.

The protein localises to the cytoplasm. The catalysed reaction is ATP + H2O = ADP + phosphate + H(+). Functionally, the RuvA-RuvB-RuvC complex processes Holliday junction (HJ) DNA during genetic recombination and DNA repair, while the RuvA-RuvB complex plays an important role in the rescue of blocked DNA replication forks via replication fork reversal (RFR). RuvA specifically binds to HJ cruciform DNA, conferring on it an open structure. The RuvB hexamer acts as an ATP-dependent pump, pulling dsDNA into and through the RuvAB complex. RuvB forms 2 homohexamers on either side of HJ DNA bound by 1 or 2 RuvA tetramers; 4 subunits per hexamer contact DNA at a time. Coordinated motions by a converter formed by DNA-disengaged RuvB subunits stimulates ATP hydrolysis and nucleotide exchange. Immobilization of the converter enables RuvB to convert the ATP-contained energy into a lever motion, pulling 2 nucleotides of DNA out of the RuvA tetramer per ATP hydrolyzed, thus driving DNA branch migration. The RuvB motors rotate together with the DNA substrate, which together with the progressing nucleotide cycle form the mechanistic basis for DNA recombination by continuous HJ branch migration. Branch migration allows RuvC to scan DNA until it finds its consensus sequence, where it cleaves and resolves cruciform DNA. The protein is Holliday junction branch migration complex subunit RuvB of Syntrophomonas wolfei subsp. wolfei (strain DSM 2245B / Goettingen).